Reading from the N-terminus, the 498-residue chain is 4-aminobutyrate aminotransferase (498 aa).

164-165 (GS) lines the pyridoxal 5'-phosphate pocket. Position 222 (Arg222) interacts with substrate. Lys356 is subject to N6-(pyridoxal phosphate)lysine. Thr381 lines the pyridoxal 5'-phosphate pocket.

This sequence belongs to the class-III pyridoxal-phosphate-dependent aminotransferase family. In terms of assembly, homodimer. It depends on pyridoxal 5'-phosphate as a cofactor.

It is found in the cytoplasm. The enzyme catalyses 4-aminobutanoate + 2-oxoglutarate = succinate semialdehyde + L-glutamate. Its function is as follows. Deaminates gamma-aminobutyric acid (GABA) to succinate-semialdehyde, which in turn is converted to succinate by the succinate semialdehyde dehydrogenase. Required for the degradation of GABA, which is important for utilization of GABA as nitrogen source. This chain is 4-aminobutyrate aminotransferase (gatA), found in Emericella nidulans (strain FGSC A4 / ATCC 38163 / CBS 112.46 / NRRL 194 / M139) (Aspergillus nidulans).